A 392-amino-acid polypeptide reads, in one-letter code: MSTRESFNPESYELDKSFRLTRFTELKGTGCKVPQDVLQKLLESLQENHFQEDEQFLGAVMPRLGIGMDTCVIPLRHGGLSLVQTTDYIYPIVDDPYMMGRIACANVLSDLYAMGVTECDNMLMLLGVSNKMTDRERDKVMPLIIQGFKDAAEEAGTSVTGGQTVLNPWIVLGGVATTVCQPNEFIMPDNAVPGDVLVLTKPLGTQVAVAVHQWLDIPEKWNKIKLVVTQEDVELAYQEAMMNMARLNRTAAGLMHTFNAHAATDITGFGILGHAQNLAKQQRNEVSFVIHNLPVLAKMAAVSKACGNMFGLMHGTCPETSGGLLICLPREQAARFCAEIKSPKYGEGHQAWIIGIVEKGNRTARIIDKPRIIEVAPQVATQNVNPTPGATS.

Ser2 is subject to N-acetylserine. Residue Cys31 is part of the active site. ATP-binding positions include Lys32, 67 to 69 (GMD), Asp87, Asp110, and 161 to 164 (GGQT). Asp69 lines the Mg(2+) pocket. Asp110 lines the Mg(2+) pocket. Asp265 is a Mg(2+) binding site.

This sequence belongs to the selenophosphate synthase 1 family. Class II subfamily. In terms of assembly, homodimer. Heterodimer with isoform 3. Homodimer. Heterodimer with isoform 4. As to quaternary structure, homodimer. Heterodimer with isoform 1. In terms of assembly, homodimer. Heterodimer with isoform 2. Mg(2+) is required as a cofactor. In terms of tissue distribution, gradually expressed during the cell cycle until G2/M phase and then decreases. As to expression, gradually expressed during the cell cycle until S phase and then decreases.

The protein resides in the cell membrane. Its subcellular location is the nucleus membrane. It is found in the cytoplasm. The catalysed reaction is hydrogenselenide + ATP + H2O = selenophosphate + AMP + phosphate + 2 H(+). With respect to regulation, activated by phosphate ions and by potassium ions. In terms of biological role, synthesizes selenophosphate from selenide and ATP. This is Selenide, water dikinase 1 (SEPHS1) from Homo sapiens (Human).